A 243-amino-acid chain; its full sequence is NAD-dependent protein deacylase SIR2rp3 (243 aa).

Residues 1–239 form the Deacetylase sirtuin-type domain; the sequence is MKACRCITIL…PTWVDQVLKE (239 aa). 12-31 is a binding site for NAD(+); it reads GAGISAESGISTFRDSNGLW. Substrate-binding residues include Y56 and R59. 95 to 98 is an NAD(+) binding site; that stretch reads QNVD. H113 acts as the Proton acceptor in catalysis. Zn(2+) contacts are provided by C121 and C141. NAD(+)-binding positions include 181 to 183 and A225; that span reads GTS.

The protein belongs to the sirtuin family. Class III subfamily. Zn(2+) is required as a cofactor.

Its subcellular location is the mitochondrion. It carries out the reaction N(6)-malonyl-L-lysyl-[protein] + NAD(+) + H2O = 2''-O-malonyl-ADP-D-ribose + nicotinamide + L-lysyl-[protein]. The enzyme catalyses N(6)-succinyl-L-lysyl-[protein] + NAD(+) + H2O = 2''-O-succinyl-ADP-D-ribose + nicotinamide + L-lysyl-[protein]. It catalyses the reaction N(6)-glutaryl-L-lysyl-[protein] + NAD(+) + H2O = 2''-O-glutaryl-ADP-D-ribose + nicotinamide + L-lysyl-[protein]. NAD-dependent lysine demalonylase, desuccinylase and deglutarylase that specifically removes malonyl, succinyl and glutaryl groups on target proteins. Has weak NAD-dependent protein deacetylase activity; however this activity may not be physiologically relevant in vivo. In Leishmania major, this protein is NAD-dependent protein deacylase SIR2rp3 (SIR2rp3).